We begin with the raw amino-acid sequence, 29 residues long: Cyclotide psyleio A (29 aa).

The segment at residues 1 to 29 is a cross-link (cyclopeptide (Gly-Asp)); the sequence is GLPICGETCFTGTCNTPGCSCTYPICTRD. Cystine bridges form between Cys-5/Cys-19, Cys-9/Cys-21, and Cys-14/Cys-26.

In terms of processing, this is a cyclic peptide.

In terms of biological role, probably participates in a plant defense mechanism. The protein is Cyclotide psyleio A of Psychotria brachyceras.